Here is a 255-residue protein sequence, read N- to C-terminus: Aliphatic sulfonates import ATP-binding protein SsuB (255 aa).

In terms of domain architecture, ABC transporter spans 12 to 233; it reads LLLNAVSKHY…RLGSVRLAEL (222 aa). 44 to 51 provides a ligand contact to ATP; sequence GRSGGGKS.

This sequence belongs to the ABC transporter superfamily. Aliphatic sulfonates importer (TC 3.A.1.17.2) family. In terms of assembly, the complex is composed of two ATP-binding proteins (SsuB), two transmembrane proteins (SsuC) and a solute-binding protein (SsuA).

It localises to the cell inner membrane. The catalysed reaction is ATP + H2O + aliphatic sulfonate-[sulfonate-binding protein]Side 1 = ADP + phosphate + aliphatic sulfonateSide 2 + [sulfonate-binding protein]Side 1.. In terms of biological role, part of the ABC transporter complex SsuABC involved in aliphatic sulfonates import. Responsible for energy coupling to the transport system. The chain is Aliphatic sulfonates import ATP-binding protein SsuB from Escherichia coli (strain K12).